The sequence spans 955 residues: B3 domain-containing protein Os07g0563300 (955 aa).

Composition is skewed to pro residues over residues Met-1–Ser-20 and Val-29–Pro-45. Disordered regions lie at residues Met-1 to Arg-81 and Ala-325 to Leu-392. The segment covering Gln-62–Pro-71 has biased composition (low complexity). Residues Asp-332–Lys-342 are compositionally biased toward polar residues. The segment covering Leu-343–Pro-355 has biased composition (basic and acidic residues). The span at Gln-382 to Leu-392 shows a compositional bias: low complexity. The TF-B3 DNA-binding region spans Phe-453 to Thr-554. Polar residues-rich tracts occupy residues Leu-556 to Lys-565 and Asn-598 to Glu-608. Residues Leu-556 to Ser-642 form a disordered region. A CW-type zinc finger spans residues Ser-708–Met-758. The Zn(2+) site is built by Cys-717, Cys-720, Cys-738, and Cys-750. The disordered stretch occupies residues Met-856–Thr-955. The span at Arg-862–Pro-877 shows a compositional bias: basic and acidic residues. Polar residues-rich tracts occupy residues Gly-878–His-900 and Thr-920–Gln-933. Over residues Glu-939–Thr-955 the composition is skewed to basic and acidic residues.

It localises to the nucleus. The protein is B3 domain-containing protein Os07g0563300 of Oryza sativa subsp. japonica (Rice).